Here is a 142-residue protein sequence, read N- to C-terminus: Large ribosomal subunit protein uL11 (142 aa).

It belongs to the universal ribosomal protein uL11 family. Part of the ribosomal stalk of the 50S ribosomal subunit. Interacts with L10 and the large rRNA to form the base of the stalk. L10 forms an elongated spine to which L12 dimers bind in a sequential fashion forming a multimeric L10(L12)X complex. One or more lysine residues are methylated.

In terms of biological role, forms part of the ribosomal stalk which helps the ribosome interact with GTP-bound translation factors. In Afipia carboxidovorans (strain ATCC 49405 / DSM 1227 / KCTC 32145 / OM5) (Oligotropha carboxidovorans), this protein is Large ribosomal subunit protein uL11.